A 954-amino-acid chain; its full sequence is Glycine dehydrogenase (decarboxylating) (954 aa).

At K704 the chain carries N6-(pyridoxal phosphate)lysine.

It belongs to the GcvP family. The glycine cleavage system is composed of four proteins: P, T, L and H. Requires pyridoxal 5'-phosphate as cofactor.

It carries out the reaction N(6)-[(R)-lipoyl]-L-lysyl-[glycine-cleavage complex H protein] + glycine + H(+) = N(6)-[(R)-S(8)-aminomethyldihydrolipoyl]-L-lysyl-[glycine-cleavage complex H protein] + CO2. In terms of biological role, the glycine cleavage system catalyzes the degradation of glycine. The P protein binds the alpha-amino group of glycine through its pyridoxal phosphate cofactor; CO(2) is released and the remaining methylamine moiety is then transferred to the lipoamide cofactor of the H protein. The sequence is that of Glycine dehydrogenase (decarboxylating) from Rhizobium etli (strain CIAT 652).